Here is a 136-residue protein sequence, read N- to C-terminus: Histone H3.1t (136 aa).

The segment at 1-43 (MARTKQTARKSTGGKAPRKQLATKVARKSAPATGGVKKPHRYR) is disordered. At arginine 3 the chain carries Asymmetric dimethylarginine; by PRMT6; alternate. Arginine 3 carries the citrulline; alternate modification. At threonine 4 the chain carries Phosphothreonine; by HASPIN. Residue lysine 5 is modified to Allysine; alternate. Lysine 5 carries the N6,N6,N6-trimethyllysine; alternate modification. The residue at position 5 (lysine 5) is an N6,N6-dimethyllysine; alternate. Lysine 5 carries the N6-(2-hydroxyisobutyryl)lysine; alternate modification. Lysine 5 carries the N6-(beta-hydroxybutyryl)lysine; alternate modification. Lysine 5 bears the N6-acetyllysine; alternate mark. Residue lysine 5 is modified to N6-methyllysine; alternate. Glutamine 6 bears the 5-glutamyl dopamine; alternate mark. Glutamine 6 is modified (5-glutamyl serotonin; alternate). Position 7 is a phosphothreonine; by PKC (threonine 7). The residue at position 9 (arginine 9) is a Citrulline; alternate. At arginine 9 the chain carries Symmetric dimethylarginine; by PRMT5; alternate. N6,N6,N6-trimethyllysine; alternate is present on lysine 10. Lysine 10 is modified (N6,N6-dimethyllysine; alternate). Residue lysine 10 is modified to N6-(2-hydroxyisobutyryl)lysine; alternate. At lysine 10 the chain carries N6-(beta-hydroxybutyryl)lysine; alternate. The residue at position 10 (lysine 10) is an N6-acetyllysine; alternate. Lysine 10 is subject to N6-methyllysine; alternate. The residue at position 10 (lysine 10) is an N6-lactoyllysine; alternate. The residue at position 11 (serine 11) is an ADP-ribosylserine; alternate. Phosphoserine; alternate; by AURKB, AURKC, RPS6KA3, RPS6KA4 and RPS6KA5 is present on serine 11. Threonine 12 bears the Phosphothreonine; by PKC mark. Residue lysine 15 is modified to N6-(2-hydroxyisobutyryl)lysine; alternate. An N6-(beta-hydroxybutyryl)lysine; alternate modification is found at lysine 15. An N6-acetyllysine; alternate modification is found at lysine 15. Residue lysine 15 is modified to N6-lactoyllysine; alternate. Lysine 15 bears the N6-glutaryllysine; alternate mark. Lysine 15 carries the post-translational modification N6-succinyllysine; alternate. Arginine 18 carries the post-translational modification Citrulline; alternate. Arginine 18 bears the Asymmetric dimethylarginine; by CARM1; alternate mark. 2 positions are modified to N6-(2-hydroxyisobutyryl)lysine; alternate: lysine 19 and lysine 24. N6-(beta-hydroxybutyryl)lysine; alternate occurs at positions 19 and 24. Residues lysine 19 and lysine 24 each carry the N6-acetyllysine; alternate modification. N6-methyllysine; alternate is present on residues lysine 19 and lysine 24. 2 positions are modified to N6-lactoyllysine; alternate: lysine 19 and lysine 24. Residues lysine 19 and lysine 24 each carry the N6-glutaryllysine; alternate modification. 2 positions are modified to N6-butyryllysine; alternate: lysine 19 and lysine 24. Position 27 is a citrulline (arginine 27). Lysine 28 carries the N6,N6,N6-trimethyllysine; alternate modification. An N6,N6-dimethyllysine; alternate modification is found at lysine 28. Position 28 is an N6-(2-hydroxyisobutyryl)lysine; alternate (lysine 28). Position 28 is an N6-acetyllysine; alternate (lysine 28). Position 28 is an N6-methyllysine; alternate (lysine 28). Lysine 28 carries the N6-lactoyllysine; alternate modification. Lysine 28 bears the N6-glutaryllysine; alternate mark. Serine 29 is subject to ADP-ribosylserine; alternate. At serine 29 the chain carries Phosphoserine; alternate; by AURKB, AURKC and RPS6KA5. Lysine 37 is subject to N6,N6,N6-trimethyllysine; alternate. Residue lysine 37 is modified to N6,N6-dimethyllysine; alternate. N6-(2-hydroxyisobutyryl)lysine; alternate is present on lysine 37. Lysine 37 bears the N6-acetyllysine; alternate mark. An N6-methyllysine; alternate modification is found at lysine 37. Position 38 is an N6-methyllysine (lysine 38). Phosphotyrosine is present on tyrosine 42. Lysine 57 carries the N6,N6,N6-trimethyllysine; alternate modification. The residue at position 57 (lysine 57) is an N6-(2-hydroxyisobutyryl)lysine; alternate. Lysine 57 is modified (N6-(beta-hydroxybutyryl)lysine; alternate). Position 57 is an N6-acetyllysine; alternate (lysine 57). Lysine 57 is modified (N6-lactoyllysine; alternate). Position 57 is an N6-glutaryllysine; alternate (lysine 57). Residue lysine 57 is modified to N6-succinyllysine; alternate. At lysine 57 the chain carries N6-methyllysine; by EHMT2; alternate. A Phosphoserine modification is found at serine 58. Residues lysine 65 and lysine 80 each carry the N6-(2-hydroxyisobutyryl)lysine; alternate modification. Lysine 65 and lysine 80 each carry N6-methyllysine; alternate. At lysine 80 the chain carries N6,N6,N6-trimethyllysine; alternate. Lysine 80 carries the post-translational modification N6,N6-dimethyllysine; alternate. Lysine 80 carries the post-translational modification N6-acetyllysine; alternate. Residue lysine 80 is modified to N6-lactoyllysine; alternate. The residue at position 80 (lysine 80) is an N6-glutaryllysine; alternate. Lysine 80 carries the post-translational modification N6-succinyllysine; alternate. Threonine 81 carries the phosphothreonine modification. Serine 87 is subject to Phosphoserine. At threonine 108 the chain carries Phosphothreonine. An N6-acetyllysine; alternate mark is found at lysine 116 and lysine 123. N6-glutaryllysine; alternate occurs at positions 116 and 123. Lysine 123 is subject to N6-(2-hydroxyisobutyryl)lysine; alternate. Lysine 123 is modified (N6-methyllysine; alternate). At lysine 123 the chain carries N6-succinyllysine; alternate.

Belongs to the histone H3 family. In terms of assembly, the nucleosome is a histone octamer containing two molecules each of H2A, H2B, H3 and H4 assembled in one H3-H4 heterotetramer and two H2A-H2B heterodimers. The octamer wraps approximately 147 bp of DNA. Interacts with TONSL; CHAF1A and CHAF1B. In terms of processing, acetylation is generally linked to gene activation. Acetylation on Lys-10 (H3K9ac) impairs methylation at Arg-9 (H3R8me2s). Acetylation on Lys-19 (H3K18ac) and Lys-24 (H3K24ac) favors methylation at Arg-18 (H3R17me). Acetylation at Lys-123 (H3K122ac) by EP300/p300 plays a central role in chromatin structure: localizes at the surface of the histone octamer and stimulates transcription, possibly by promoting nucleosome instability. Post-translationally, citrullination at Arg-9 (H3R8ci) and/or Arg-18 (H3R17ci) by PADI4 impairs methylation and represses transcription. Asymmetric dimethylation at Arg-18 (H3R17me2a) by CARM1 is linked to gene activation. Symmetric dimethylation at Arg-9 (H3R8me2s) by PRMT5 is linked to gene repression. Asymmetric dimethylation at Arg-3 (H3R2me2a) by PRMT6 is linked to gene repression and is mutually exclusive with H3 Lys-5 methylation (H3K4me2 and H3K4me3). H3R2me2a is present at the 3' of genes regardless of their transcription state and is enriched on inactive promoters, while it is absent on active promoters. In terms of processing, methylation at Lys-5 (H3K4me), Lys-37 (H3K36me) and Lys-80 (H3K79me) are linked to gene activation. Methylation at Lys-5 (H3K4me) facilitates subsequent acetylation of H3 and H4. Methylation at Lys-80 (H3K79me) is associated with DNA double-strand break (DSB) responses and is a specific target for TP53BP1. Methylation at Lys-10 (H3K9me) and Lys-28 (H3K27me) are linked to gene repression. Methylation at Lys-10 (H3K9me) is a specific target for HP1 proteins (CBX1, CBX3 and CBX5) and prevents subsequent phosphorylation at Ser-11 (H3S10ph) and acetylation of H3 and H4. Methylation at Lys-5 (H3K4me) and Lys-80 (H3K79me) require preliminary monoubiquitination of H2B at 'Lys-120'. Methylation at Lys-10 (H3K9me) and Lys-28 (H3K27me) are enriched in inactive X chromosome chromatin. Monomethylation at Lys-57 (H3K56me1) by EHMT2/G9A in G1 phase promotes interaction with PCNA and is required for DNA replication. Post-translationally, phosphorylated at Thr-4 (H3T3ph) by HASPIN during prophase and dephosphorylated during anaphase. Phosphorylation at Ser-11 (H3S10ph) by AURKB is crucial for chromosome condensation and cell-cycle progression during mitosis and meiosis. In addition phosphorylation at Ser-11 (H3S10ph) by RPS6KA4 and RPS6KA5 is important during interphase because it enables the transcription of genes following external stimulation, like mitogens, stress, growth factors or UV irradiation and result in the activation of genes, such as c-fos and c-jun. Phosphorylation at Ser-11 (H3S10ph), which is linked to gene activation, prevents methylation at Lys-10 (H3K9me) but facilitates acetylation of H3 and H4. Phosphorylation at Ser-11 (H3S10ph) by AURKB mediates the dissociation of HP1 proteins (CBX1, CBX3 and CBX5) from heterochromatin. Phosphorylation at Ser-11 (H3S10ph) is also an essential regulatory mechanism for neoplastic cell transformation. Phosphorylated at Ser-29 (H3S28ph) by MAP3K20 isoform 1, RPS6KA5 or AURKB during mitosis or upon ultraviolet B irradiation. Phosphorylation at Thr-7 (H3T6ph) by PRKCB is a specific tag for epigenetic transcriptional activation that prevents demethylation of Lys-5 (H3K4me) by LSD1/KDM1A. At centromeres, specifically phosphorylated at Thr-12 (H3T11ph) from prophase to early anaphase, by DAPK3 and PKN1. Phosphorylation at Thr-12 (H3T11ph) by PKN1 or isoform M2 of PKM (PKM2) is a specific tag for epigenetic transcriptional activation that promotes demethylation of Lys-10 (H3K9me) by KDM4C/JMJD2C. Phosphorylation at Tyr-42 (H3Y41ph) by JAK2 promotes exclusion of CBX5 (HP1 alpha) from chromatin. Ubiquitinated. In terms of processing, lysine deamination at Lys-5 (H3K4all) to form allysine is mediated by LOXL2. Allysine formation by LOXL2 only takes place on H3K4me3 and results in gene repression. Post-translationally, butyrylation of histones marks active promoters and competes with histone acetylation. It is present during late spermatogenesis. Succinylation at Lys-80 (H3K79succ) by KAT2A takes place with a maximum frequency around the transcription start sites of genes. It gives a specific tag for epigenetic transcription activation. Desuccinylation at Lys-123 (H3K122succ) by SIRT7 in response to DNA damage promotes chromatin condensation and double-strand breaks (DSBs) repair. In terms of processing, serine ADP-ribosylation constitutes the primary form of ADP-ribosylation of proteins in response to DNA damage. Serine ADP-ribosylation at Ser-11 (H3S10ADPr) is mutually exclusive with phosphorylation at Ser-11 (H3S10ph) and impairs acetylation at Lys-10 (H3K9ac). Expressed in testicular cells.

It localises to the nucleus. Its subcellular location is the chromosome. Its function is as follows. Core component of nucleosome. Nucleosomes wrap and compact DNA into chromatin, limiting DNA accessibility to the cellular machineries which require DNA as a template. Histones thereby play a central role in transcription regulation, DNA repair, DNA replication and chromosomal stability. DNA accessibility is regulated via a complex set of post-translational modifications of histones, also called histone code, and nucleosome remodeling. The polypeptide is Histone H3.1t (Homo sapiens (Human)).